The following is a 198-amino-acid chain: Dephospho-CoA kinase (198 aa).

The 89-residue stretch at 2–90 (LIAIVGKPGV…KLSLVTKPLL (89 aa)) folds into the DPCK domain. 10-15 (GVGKTS) contributes to the ATP binding site.

Belongs to the CoaE family.

Its subcellular location is the cytoplasm. The catalysed reaction is 3'-dephospho-CoA + ATP = ADP + CoA + H(+). Its pathway is cofactor biosynthesis; coenzyme A biosynthesis; CoA from (R)-pantothenate: step 5/5. Catalyzes the phosphorylation of the 3'-hydroxyl group of dephosphocoenzyme A to form coenzyme A. This is Dephospho-CoA kinase from Mycoplasma genitalium (strain ATCC 33530 / DSM 19775 / NCTC 10195 / G37) (Mycoplasmoides genitalium).